The primary structure comprises 543 residues: Chaperonin GroEL 1 (543 aa).

ATP is bound by residues T30–P33, K51, D87–T91, G415, and D496.

This sequence belongs to the chaperonin (HSP60) family. Forms a cylinder of 14 subunits composed of two heptameric rings stacked back-to-back. Interacts with the co-chaperonin GroES.

Its subcellular location is the cytoplasm. It catalyses the reaction ATP + H2O + a folded polypeptide = ADP + phosphate + an unfolded polypeptide.. Functionally, together with its co-chaperonin GroES, plays an essential role in assisting protein folding. The GroEL-GroES system forms a nano-cage that allows encapsulation of the non-native substrate proteins and provides a physical environment optimized to promote and accelerate protein folding. The sequence is that of Chaperonin GroEL 1 from Mesorhizobium japonicum (strain LMG 29417 / CECT 9101 / MAFF 303099) (Mesorhizobium loti (strain MAFF 303099)).